We begin with the raw amino-acid sequence, 295 residues long: Protoheme IX farnesyltransferase 2 (295 aa).

Helical transmembrane passes span 9–29 (ITKP…FFLA), 36–56 (LAVF…GCVF), 80–100 (LISL…GVAL), 108–128 (LAAL…SLYL), 135–155 (GTLV…VAVT), 163–183 (LTLL…IAIF), 209–229 (ILIY…SGYA), 230–250 (GMSY…MAWT), and 265–285 (FVFS…DFKV).

It belongs to the UbiA prenyltransferase family. Protoheme IX farnesyltransferase subfamily.

It is found in the cell inner membrane. It catalyses the reaction heme b + (2E,6E)-farnesyl diphosphate + H2O = Fe(II)-heme o + diphosphate. The protein operates within porphyrin-containing compound metabolism; heme O biosynthesis; heme O from protoheme: step 1/1. Converts heme B (protoheme IX) to heme O by substitution of the vinyl group on carbon 2 of heme B porphyrin ring with a hydroxyethyl farnesyl side group. The polypeptide is Protoheme IX farnesyltransferase 2 (Pseudomonas fluorescens (strain Pf0-1)).